Consider the following 597-residue polypeptide: Probable translation initiation factor IF-2 (597 aa).

The 218-residue stretch at 4-221 folds into the tr-type G domain; that stretch reads IRQPIIAVLG…LIAGLSQKYL (218 aa). Residues 13-20 form a G1 region; that stretch reads GHVDHGKT. Position 13–20 (13–20) interacts with GTP; it reads GHVDHGKT. The interval 38–42 is G2; sequence GITQH. The tract at residues 77–80 is G3; that stretch reads DTPG. GTP-binding positions include 77–81 and 131–134; these read DTPGH and NKID. Residues 131–134 are G4; the sequence is NKID. Positions 199–201 are G5; it reads SAK.

Belongs to the TRAFAC class translation factor GTPase superfamily. Classic translation factor GTPase family. IF-2 subfamily.

Function in general translation initiation by promoting the binding of the formylmethionine-tRNA to ribosomes. Seems to function along with eIF-2. In Thermococcus onnurineus (strain NA1), this protein is Probable translation initiation factor IF-2.